We begin with the raw amino-acid sequence, 510 residues long: Putative folylpolyglutamate synthase (510 aa).

Position 98–101 (98–101 (GKGS)) interacts with ATP. 3 residues coordinate Mg(2+): Ser-122, Glu-189, and His-217. Residues Arg-342 and Asp-357 each contribute to the ATP site.

Belongs to the folylpolyglutamate synthase family. A monovalent cation serves as cofactor.

The protein localises to the mitochondrion inner membrane. The protein resides in the mitochondrion matrix. It localises to the cytoplasm. It catalyses the reaction (6S)-5,6,7,8-tetrahydrofolyl-(gamma-L-Glu)(n) + L-glutamate + ATP = (6S)-5,6,7,8-tetrahydrofolyl-(gamma-L-Glu)(n+1) + ADP + phosphate + H(+). It participates in cofactor biosynthesis; tetrahydrofolylpolyglutamate biosynthesis. In terms of biological role, catalyzes conversion of folates to polyglutamate derivatives allowing concentration of folate compounds in the cell and the intracellular retention of these cofactors, which are important substrates for most of the folate-dependent enzymes that are involved in one-carbon transfer reactions involved in purine, pyrimidine and amino acid synthesis. This Caenorhabditis elegans protein is Putative folylpolyglutamate synthase.